The following is a 494-amino-acid chain: Protein translocase subunit SecD (494 aa).

The next 6 helical transmembrane spans lie at 7-27, 322-342, 345-365, 372-392, 420-440, and 441-461; these read WFALLIALVISAFLLCINLPF, LIAALLGLSLVAIFMVSFYRL, FIAIFALSFYALFNIAIYALI, PGVAGFVLSIGMAVDANVLIF, IIDGHITTLISCISLFYLGTG, and FVKGFAATLGIGVFISLFTAL.

It belongs to the SecD/SecF family. SecD subfamily. As to quaternary structure, forms a complex with SecF. Part of the essential Sec protein translocation apparatus which comprises SecA, SecYEG and auxiliary proteins SecDF. Other proteins may also be involved.

It is found in the cell inner membrane. Part of the Sec protein translocase complex. Interacts with the SecYEG preprotein conducting channel. SecDF uses the proton motive force (PMF) to complete protein translocation after the ATP-dependent function of SecA. In terms of biological role, probably participates in protein translocation into and across both the cytoplasmic and thylakoid membranes in cyanobacterial cells. This Prochlorococcus marinus (strain SARG / CCMP1375 / SS120) protein is Protein translocase subunit SecD.